A 229-amino-acid polypeptide reads, in one-letter code: 3-dehydroquinate dehydratase (229 aa).

Residues 33–35 (EWR) and Arg-65 contribute to the 3-dehydroquinate site. His-121 functions as the Proton donor/acceptor in the catalytic mechanism. The active-site Schiff-base intermediate with substrate is Lys-146. Residues Arg-188, Ser-207, and Gln-211 each coordinate 3-dehydroquinate.

It belongs to the type-I 3-dehydroquinase family. As to quaternary structure, homodimer.

The catalysed reaction is 3-dehydroquinate = 3-dehydroshikimate + H2O. It participates in metabolic intermediate biosynthesis; chorismate biosynthesis; chorismate from D-erythrose 4-phosphate and phosphoenolpyruvate: step 3/7. In terms of biological role, involved in the third step of the chorismate pathway, which leads to the biosynthesis of aromatic amino acids. Catalyzes the cis-dehydration of 3-dehydroquinate (DHQ) and introduces the first double bond of the aromatic ring to yield 3-dehydroshikimate. This Lactococcus lactis subsp. cremoris (strain MG1363) protein is 3-dehydroquinate dehydratase.